The chain runs to 457 residues: Cyanidin 3-O-galactoside 2''-O-xylosyltransferase FGGT1 (457 aa).

It belongs to the UDP-glycosyltransferase family. In terms of tissue distribution, expressed in ovaries.

The enzyme catalyses cyanidin 3-O-beta-D-galactoside + UDP-alpha-D-xylose = cyanidin 3-O-[beta-D-xylosyl-(1-&gt;2)-beta-D-galactoside] + UDP + H(+). It functions in the pathway pigment biosynthesis; anthocyanin biosynthesis. Xylosyltransferase involved in anthocyanin biosynthesis by catalyzing the xylosylation of cyanidin 3-O-galactoside to form cyanidin 3-O-[2-O-(-xylosyl)-galactoside]. Required for the accumulation of anthocyanin in red-fleshed kiwifruit varieties. The protein is Cyanidin 3-O-galactoside 2''-O-xylosyltransferase FGGT1 of Actinidia chinensis var. chinensis (Chinese soft-hair kiwi).